The primary structure comprises 413 residues: Clamp protein VP6 (413 aa).

The protein belongs to the reoviridae clamp protein family. Interacts with capsid proteins VP3, VP4 and VP7.

Its subcellular location is the virion. Located at the interface of the incomplete T=13 outer capsid and the pseudo T=2 inner capsid, 120 VP6 subunits clamp and stabilize the inner capsid shell. The sequence is that of Clamp protein VP6 (S8) from Ctenopharyngodon idella (Grass carp).